The primary structure comprises 103 residues: MAGARRRARCPASAGCAYSARPPPLSTRGRRISAGSGQPRWWPWGSPPPPDTRYRRPGPGRRARSCLHAGPRGRPPHSRTRARRTSPGAGGGGWRGGSCTSQR.

Residues 1–103 form a disordered region; the sequence is MAGARRRARC…WRGGSCTSQR (103 aa). Positions 35–44 are enriched in low complexity; the sequence is GSGQPRWWPW. 2 stretches are compositionally biased toward basic residues: residues 55 to 65 and 74 to 84; these read RRPGPGRRARS and RPPHSRTRARR.

This sequence belongs to the epstein-barr virus RPMS1 family.

This is an uncharacterized protein from Homo sapiens (Human).